Here is a 185-residue protein sequence, read N- to C-terminus: Peptidyl-tRNA hydrolase (185 aa).

Tyrosine 14 contributes to the tRNA binding site. Histidine 19 functions as the Proton acceptor in the catalytic mechanism. TRNA is bound by residues tyrosine 64, asparagine 66, and asparagine 112.

This sequence belongs to the PTH family. Monomer.

It is found in the cytoplasm. It carries out the reaction an N-acyl-L-alpha-aminoacyl-tRNA + H2O = an N-acyl-L-amino acid + a tRNA + H(+). In terms of biological role, hydrolyzes ribosome-free peptidyl-tRNAs (with 1 or more amino acids incorporated), which drop off the ribosome during protein synthesis, or as a result of ribosome stalling. Functionally, catalyzes the release of premature peptidyl moieties from peptidyl-tRNA molecules trapped in stalled 50S ribosomal subunits, and thus maintains levels of free tRNAs and 50S ribosomes. The chain is Peptidyl-tRNA hydrolase from Ligilactobacillus salivarius (strain UCC118) (Lactobacillus salivarius).